Here is a 198-residue protein sequence, read N- to C-terminus: Large ribosomal subunit protein bL9 (198 aa).

The segment covering 156-166 (RGEDISTRQED) has biased composition (basic and acidic residues). Positions 156 to 198 (RGEDISTRQEDQDAAAEALAAAGEFFDPEAHNDGEQEEEAGDK) are disordered.

This sequence belongs to the bacterial ribosomal protein bL9 family.

Binds to the 23S rRNA. This chain is Large ribosomal subunit protein bL9, found in Rhodopseudomonas palustris (strain BisB18).